The primary structure comprises 170 residues: Adenine phosphoribosyltransferase (170 aa).

It belongs to the purine/pyrimidine phosphoribosyltransferase family. In terms of assembly, homodimer.

It is found in the cytoplasm. It catalyses the reaction AMP + diphosphate = 5-phospho-alpha-D-ribose 1-diphosphate + adenine. It participates in purine metabolism; AMP biosynthesis via salvage pathway; AMP from adenine: step 1/1. In terms of biological role, catalyzes a salvage reaction resulting in the formation of AMP, that is energically less costly than de novo synthesis. This chain is Adenine phosphoribosyltransferase, found in Acholeplasma laidlawii (strain PG-8A).